The chain runs to 485 residues: MTRTQEPLPTVAAPKVGFISLGCPKALVDSERILTQLRAEGYEVAPNYEDAQAVIVNTCGFITPAVEESLSAIGEALDATGKVIVTGCLGERPEKILERHPKVAAITGSEAVDDVMAHVRELLPIELDPFTGLLPVAAPGMRQGDTLAPSVKLTPRHYAYVKIAEGCNHTCSFCIIPKLRGRQVSRDAGAVLYEAYRLIAGGTKELMIISQDTSAYGVDLRHRTSEFQGEQVRAHLIDLAEKLGEMGAWVRMHYVYPYPHVERIVELMSQGKILPYLDVPLQHASPAVLKRMRRPGAGKQLDTIRRWREICPELVIRSTFIVGFPGETEEDFQLLLDFLEEARLDRVGAFTYSDVEEADANALDGAIPEEVKQERLARFMEVAQRISREKLAEKVGRVLDVIIDEFNDDEGDEPGTRLIGRTKGDAPGIDGQVYLYAGDFAGQVKIGDIVQARIEDSDEYDLYGEVIHTPEWRPNVPLLGHFGKH.

The MTTase N-terminal domain maps to Pro-14–Pro-124. [4Fe-4S] cluster contacts are provided by Cys-23, Cys-59, Cys-88, Cys-167, Cys-171, and Cys-174. A Radical SAM core domain is found at Leu-153–Glu-389. The 77-residue stretch at Ala-392–His-468 folds into the TRAM domain.

Belongs to the methylthiotransferase family. RimO subfamily. It depends on [4Fe-4S] cluster as a cofactor.

Its subcellular location is the cytoplasm. It carries out the reaction L-aspartate(89)-[ribosomal protein uS12]-hydrogen + (sulfur carrier)-SH + AH2 + 2 S-adenosyl-L-methionine = 3-methylsulfanyl-L-aspartate(89)-[ribosomal protein uS12]-hydrogen + (sulfur carrier)-H + 5'-deoxyadenosine + L-methionine + A + S-adenosyl-L-homocysteine + 2 H(+). In terms of biological role, catalyzes the methylthiolation of an aspartic acid residue of ribosomal protein uS12. The chain is Ribosomal protein uS12 methylthiotransferase RimO from Deinococcus geothermalis (strain DSM 11300 / CIP 105573 / AG-3a).